Reading from the N-terminus, the 364-residue chain is Aminomethyltransferase (364 aa).

It belongs to the GcvT family. As to quaternary structure, the glycine cleavage system is composed of four proteins: P, T, L and H.

It catalyses the reaction N(6)-[(R)-S(8)-aminomethyldihydrolipoyl]-L-lysyl-[protein] + (6S)-5,6,7,8-tetrahydrofolate = N(6)-[(R)-dihydrolipoyl]-L-lysyl-[protein] + (6R)-5,10-methylene-5,6,7,8-tetrahydrofolate + NH4(+). Its function is as follows. The glycine cleavage system catalyzes the degradation of glycine. The sequence is that of Aminomethyltransferase from Salmonella paratyphi C (strain RKS4594).